The primary structure comprises 94 residues: Co-chaperonin GroES (94 aa).

Belongs to the GroES chaperonin family. Heptamer of 7 subunits arranged in a ring. Interacts with the chaperonin GroEL.

It localises to the cytoplasm. Together with the chaperonin GroEL, plays an essential role in assisting protein folding. The GroEL-GroES system forms a nano-cage that allows encapsulation of the non-native substrate proteins and provides a physical environment optimized to promote and accelerate protein folding. GroES binds to the apical surface of the GroEL ring, thereby capping the opening of the GroEL channel. This Lactococcus lactis subsp. cremoris (strain SK11) protein is Co-chaperonin GroES.